The primary structure comprises 390 residues: Lipid-A-disaccharide synthase (390 aa).

This sequence belongs to the LpxB family.

It catalyses the reaction a lipid X + a UDP-2-N,3-O-bis[(3R)-3-hydroxyacyl]-alpha-D-glucosamine = a lipid A disaccharide + UDP + H(+). It participates in bacterial outer membrane biogenesis; LPS lipid A biosynthesis. Condensation of UDP-2,3-diacylglucosamine and 2,3-diacylglucosamine-1-phosphate to form lipid A disaccharide, a precursor of lipid A, a phosphorylated glycolipid that anchors the lipopolysaccharide to the outer membrane of the cell. The chain is Lipid-A-disaccharide synthase from Haemophilus ducreyi (strain 35000HP / ATCC 700724).